The following is a 27-amino-acid chain: Delta-conotoxin SuVIA (27 aa).

3 disulfides stabilise this stretch: C1/C17, C8/C21, and C16/C25.

It belongs to the conotoxin O1 superfamily. Expressed by the venom duct, in the proximal part (indicative of a defensive role).

It is found in the secreted. Its function is as follows. This toxin activates voltage-gated sodium channels (Nav1.3/SCN3A (EC(50)=3.98 nM), Nav1.4/SCN4A (EC(50)=4.99 nM), Nav1.6/SCN8A (EC(50)=1.27 nM) and Nav1.7/SCN9A (EC(50)=2.42 nM)). It shifts the voltage-dependence of activation to more hyperpolarized potentials but has only little effect on channel inactivation. In vivo, it induces nocifensive or pain-like behaviors in mice when injected intraplantarly. This is coherent with the specific defensive role deduced from its proximal position in the venom gland. In Conus suturatus (Sutured cone), this protein is Delta-conotoxin SuVIA.